The following is a 299-amino-acid chain: 4-diphosphocytidyl-2-C-methyl-D-erythritol kinase (299 aa).

The active site involves Lys10. Residue 96-106 (PVAGGMAGGSA) participates in ATP binding. Asp138 is an active-site residue.

It belongs to the GHMP kinase family. IspE subfamily.

It carries out the reaction 4-CDP-2-C-methyl-D-erythritol + ATP = 4-CDP-2-C-methyl-D-erythritol 2-phosphate + ADP + H(+). It participates in isoprenoid biosynthesis; isopentenyl diphosphate biosynthesis via DXP pathway; isopentenyl diphosphate from 1-deoxy-D-xylulose 5-phosphate: step 3/6. Its function is as follows. Catalyzes the phosphorylation of the position 2 hydroxy group of 4-diphosphocytidyl-2C-methyl-D-erythritol. This is 4-diphosphocytidyl-2-C-methyl-D-erythritol kinase from Streptomyces coelicolor (strain ATCC BAA-471 / A3(2) / M145).